The sequence spans 862 residues: Probable disease resistance protein At5g43740 (862 aa).

Positions 24-61 (RNYIHMMESNLDALQKTMEELKNGRDDLLGRVSIEEDK) form a coiled coil. Positions 135–438 (MVAQEIIHKV…CEGFINPNRY (304 aa)) constitute an NB-ARC domain. 178–185 (GMGGVGKT) is an ATP binding site. LRR repeat units lie at residues 511-532 (IVRT…SKCP), 533-555 (NLST…FFRF), 558-580 (KLVV…ISNL), and 582-604 (SLQY…KKLR).

It belongs to the disease resistance NB-LRR family.

In terms of biological role, probable disease resistance protein. The protein is Probable disease resistance protein At5g43740 of Arabidopsis thaliana (Mouse-ear cress).